Here is a 169-residue protein sequence, read N- to C-terminus: Secretory-abundant heat soluble protein 1 (169 aa).

The signal sequence occupies residues 1–19; the sequence is MSRAAVAIALLGCVVAAYG. Residues 31 to 60 form an SAHS-c1 region; sequence EWTGKSWMGKWESTDRIENFDAFISALGLP. Residues 75 to 103 form an SAHS-c2 region; that stretch reads WKEGDHYHHQISVPDKNYKNDVNFKLNEE. The N-linked (GlcNAc...) asparagine glycan is linked to asparagine 109. The interval 116–165 is SAHS-c3; sequence KYTEDGGNLKAEVHVPSRNKVIHDEYKVNGDELEKTYKVGDVTAKRWYKK.

This sequence belongs to the Secretory-abundant heat soluble protein (SAHS) family.

The protein localises to the secreted. Functionally, secreted heat soluble protein acting as a molecular shield in water-deficient condition. Tardigrade-specific intrinsically disordered proteins (TDPs) are essential for desiccation tolerance by forming non-crystalline amorphous solids upon desiccation, and this vitrified state mirrors their protective capabilities. The polypeptide is Secretory-abundant heat soluble protein 1 (Ramazzottius varieornatus (Water bear)).